The chain runs to 311 residues: 4-hydroxy-3-methylbut-2-enyl diphosphate reductase (311 aa).

Cys12 contacts [4Fe-4S] cluster. Residues His41 and His74 each coordinate (2E)-4-hydroxy-3-methylbut-2-enyl diphosphate. Positions 41 and 74 each coordinate dimethylallyl diphosphate. Residues His41 and His74 each contribute to the isopentenyl diphosphate site. Cys96 contacts [4Fe-4S] cluster. His124 lines the (2E)-4-hydroxy-3-methylbut-2-enyl diphosphate pocket. His124 contacts dimethylallyl diphosphate. His124 provides a ligand contact to isopentenyl diphosphate. Glu126 serves as the catalytic Proton donor. Thr168 contacts (2E)-4-hydroxy-3-methylbut-2-enyl diphosphate. Residue Cys198 coordinates [4Fe-4S] cluster. Positions 226, 227, 228, and 270 each coordinate (2E)-4-hydroxy-3-methylbut-2-enyl diphosphate. Dimethylallyl diphosphate contacts are provided by Ser226, Ser227, Asn228, and Ser270. 4 residues coordinate isopentenyl diphosphate: Ser226, Ser227, Asn228, and Ser270.

It belongs to the IspH family. It depends on [4Fe-4S] cluster as a cofactor.

It carries out the reaction isopentenyl diphosphate + 2 oxidized [2Fe-2S]-[ferredoxin] + H2O = (2E)-4-hydroxy-3-methylbut-2-enyl diphosphate + 2 reduced [2Fe-2S]-[ferredoxin] + 2 H(+). The enzyme catalyses dimethylallyl diphosphate + 2 oxidized [2Fe-2S]-[ferredoxin] + H2O = (2E)-4-hydroxy-3-methylbut-2-enyl diphosphate + 2 reduced [2Fe-2S]-[ferredoxin] + 2 H(+). It functions in the pathway isoprenoid biosynthesis; dimethylallyl diphosphate biosynthesis; dimethylallyl diphosphate from (2E)-4-hydroxy-3-methylbutenyl diphosphate: step 1/1. The protein operates within isoprenoid biosynthesis; isopentenyl diphosphate biosynthesis via DXP pathway; isopentenyl diphosphate from 1-deoxy-D-xylulose 5-phosphate: step 6/6. In terms of biological role, catalyzes the conversion of 1-hydroxy-2-methyl-2-(E)-butenyl 4-diphosphate (HMBPP) into a mixture of isopentenyl diphosphate (IPP) and dimethylallyl diphosphate (DMAPP). Acts in the terminal step of the DOXP/MEP pathway for isoprenoid precursor biosynthesis. This chain is 4-hydroxy-3-methylbut-2-enyl diphosphate reductase, found in Saccharophagus degradans (strain 2-40 / ATCC 43961 / DSM 17024).